The chain runs to 602 residues: Pentatricopeptide repeat-containing protein At5g11310, mitochondrial (602 aa).

Residues 1 to 35 (MNSLFTAFRRNLLLNPNPHRNFFLHRLLSSSRRSS) constitute a mitochondrion transit peptide. 11 PPR repeats span residues 134–165 (SPSL…VRSD), 172–202 (SADT…ARSY), 211–241 (ELRL…IGGT), 249–283 (SVRI…NVKP), 284–318 (TVVT…EMEI), 319–353 (NFMV…ESGP), 354–388 (TIVT…GVDP), 389–423 (TTTT…GHSP), 424–458 (DRLT…GIDP), 459–493 (DLLT…GIIP), and 494–528 (QYIT…PHSK).

It belongs to the PPR family. P subfamily.

Its subcellular location is the mitochondrion. This chain is Pentatricopeptide repeat-containing protein At5g11310, mitochondrial, found in Arabidopsis thaliana (Mouse-ear cress).